A 716-amino-acid polypeptide reads, in one-letter code: Delta-1-pyrroline-5-carboxylate synthase 1 (716 aa).

The segment at Met1–Arg296 is glutamate 5-kinase. Residues Ser60, Asp157, and Asn176 each coordinate substrate. ATP contacts are provided by residues Ser196 to Asp197, Tyr202 to Ser207, and Arg236 to Lys242. The interval Glu297–Gln716 is gamma-glutamyl phosphate reductase.

The protein in the N-terminal section; belongs to the glutamate 5-kinase family. It in the C-terminal section; belongs to the gamma-glutamyl phosphate reductase family. In terms of tissue distribution, expressed at high levels in leaves.

The enzyme catalyses L-glutamate + ATP = L-glutamyl 5-phosphate + ADP. The catalysed reaction is L-glutamate 5-semialdehyde + phosphate + NADP(+) = L-glutamyl 5-phosphate + NADPH + H(+). The protein operates within amino-acid biosynthesis; L-proline biosynthesis; L-glutamate 5-semialdehyde from L-glutamate: step 1/2. It functions in the pathway amino-acid biosynthesis; L-proline biosynthesis; L-glutamate 5-semialdehyde from L-glutamate: step 2/2. With respect to regulation, feedback regulated by proline. Its function is as follows. P5CS plays a key role in proline biosynthesis, leading to osmoregulation in plants. Involved in abiotic stress tolerance. This chain is Delta-1-pyrroline-5-carboxylate synthase 1, found in Oryza sativa subsp. japonica (Rice).